The sequence spans 257 residues: Zinc import ATP-binding protein ZnuC (257 aa).

Residues 6–221 form the ABC transporter domain; it reads IRLEQVGVSF…PAFVELFGQN (216 aa). 38-45 serves as a coordination point for ATP; that stretch reads GPNGAGKT.

This sequence belongs to the ABC transporter superfamily. Zinc importer (TC 3.A.1.15.5) family. The complex is composed of two ATP-binding proteins (ZnuC), two transmembrane proteins (ZnuB) and a solute-binding protein (ZnuA).

Its subcellular location is the cell inner membrane. The catalysed reaction is Zn(2+)(out) + ATP(in) + H2O(in) = Zn(2+)(in) + ADP(in) + phosphate(in) + H(+)(in). In terms of biological role, part of the ABC transporter complex ZnuABC involved in zinc import. Responsible for energy coupling to the transport system. This chain is Zinc import ATP-binding protein ZnuC, found in Pseudomonas entomophila (strain L48).